Consider the following 178-residue polypeptide: NADH-ubiquinone oxidoreductase chain 6 (178 aa).

5 helical membrane-spanning segments follow: residues 1-21 (MMTY…VGFS), 25-45 (SPIY…GIVL), 48-68 (GGSF…LVVF), 89-109 (VLLT…YLLL), and 152-172 (YGYW…IVVM).

This sequence belongs to the complex I subunit 6 family.

The protein resides in the mitochondrion membrane. It catalyses the reaction a ubiquinone + NADH + 5 H(+)(in) = a ubiquinol + NAD(+) + 4 H(+)(out). Core subunit of the mitochondrial membrane respiratory chain NADH dehydrogenase (Complex I) that is believed to belong to the minimal assembly required for catalysis. Complex I functions in the transfer of electrons from NADH to the respiratory chain. The immediate electron acceptor for the enzyme is believed to be ubiquinone. The protein is NADH-ubiquinone oxidoreductase chain 6 (MT-ND6) of Pseudosoriculus fumidus (Taiwanese brown-toothed shrew).